A 446-amino-acid chain; its full sequence is N-succinylarginine dihydrolase (446 aa).

Substrate is bound by residues 19 to 28 (AGLSFGNVAS), N110, and 137 to 138 (HR). E174 is a catalytic residue. R213 lines the substrate pocket. The active site involves H249. Positions 251 and 364 each coordinate substrate. Residue C370 is the Nucleophile of the active site.

This sequence belongs to the succinylarginine dihydrolase family. Homodimer.

The enzyme catalyses N(2)-succinyl-L-arginine + 2 H2O + 2 H(+) = N(2)-succinyl-L-ornithine + 2 NH4(+) + CO2. Its pathway is amino-acid degradation; L-arginine degradation via AST pathway; L-glutamate and succinate from L-arginine: step 2/5. Functionally, catalyzes the hydrolysis of N(2)-succinylarginine into N(2)-succinylornithine, ammonia and CO(2). The polypeptide is N-succinylarginine dihydrolase (Burkholderia thailandensis (strain ATCC 700388 / DSM 13276 / CCUG 48851 / CIP 106301 / E264)).